A 143-amino-acid chain; its full sequence is General odorant-binding protein 28a (143 aa).

The signal sequence occupies residues 1 to 21; that stretch reads MQSTPIILVAIVLLGAALVRA. Cystine bridges form between C38–C69, C65–C123, and C113–C132.

In terms of tissue distribution, expressed in antenna, mostly on the medial and posterior surface of the third antennal segment.

It is found in the secreted. This Drosophila melanogaster (Fruit fly) protein is General odorant-binding protein 28a (Obp28a).